The chain runs to 438 residues: Arginine deiminase-like protein (438 aa).

This sequence belongs to the arginine deiminase family.

The sequence is that of Arginine deiminase-like protein from Mycoplasma pneumoniae (strain ATCC 29342 / M129 / Subtype 1) (Mycoplasmoides pneumoniae).